The sequence spans 634 residues: Growth hormone receptor (634 aa).

Positions 1–18 (MDLWQLLLTLAVAGSSDA) are cleaved as a signal peptide. The Extracellular portion of the chain corresponds to 19–260 (FSGSEATPAF…NPSACEEDFQ (242 aa)). The N-linked (GlcNAc...) asparagine glycan is linked to N46. A disulfide bridge links C56 with C66. Residue N73 is glycosylated (N-linked (GlcNAc...) asparagine). A disulfide bond links C97 and C108. Residue N111 is glycosylated (N-linked (GlcNAc...) asparagine). An intrachain disulfide couples C122 to C136. The 104-residue stretch at 147-250 (PPVGLNWTLL…EVLLITFPQM (104 aa)) folds into the Fibronectin type-III domain. N-linked (GlcNAc...) asparagine glycosylation is found at N152, N157, and N196. Residues 236–240 (YGKFS) carry the WSXWS motif motif. A helical membrane pass occupies residues 261–284 (FPWFLIIIFGILGLAVTLYLLIFS). Over 285 to 634 (KQQRIKMLIL…STDQLNKIMP (350 aa)) the chain is Cytoplasmic. The tract at residues 290–375 (KMLILPPVPV…HEKSLNIFGA (86 aa)) is required for JAK2 binding. The short motif at 293–301 (ILPPVPVPK) is the Box 1 motif element. The UbE motif motif lies at 336–345 (DSWVEFIELD). S337 is subject to Phosphoserine.

This sequence belongs to the type I cytokine receptor family. Type 1 subfamily. As to quaternary structure, on growth hormone (GH) binding, forms homodimers and binds JAK2 via a box 1-containing domain. Post-translationally, the soluble form (GHBP) is produced by phorbol ester-promoted proteolytic cleavage at the cell surface (shedding) by ADAM17/TACE. Shedding is inhibited by growth hormone (GH) binding to the receptor probably due to a conformational change in GHR rendering the receptor inaccessible to ADAM17. In terms of processing, on GH binding, phosphorylated on tyrosine residues in the cytoplasmic domain by JAK2. Ubiquitinated by the ECS(SOCS2) complex following ligand-binding and phosphorylation by JAK2, leading to its degradation by the proteasome. Regulation by the ECS(SOCS2) complex acts as a negative feedback loop of growth hormone receptor signaling. Ubiquitination is not sufficient for GHR internalization.

The protein localises to the cell membrane. It is found in the secreted. Its function is as follows. Receptor for pituitary gland growth hormone (GH1) involved in regulating postnatal body growth. On ligand binding, couples to the JAK2/STAT5 pathway. The soluble form (GHBP) acts as a reservoir of growth hormone in plasma and may be a modulator/inhibitor of GH signaling. The sequence is that of Growth hormone receptor (GHR) from Bos taurus (Bovine).